Consider the following 522-residue polypeptide: Penicillin-sensitive carboxypeptidase A (522 aa).

Ser94 serves as the catalytic Acyl-ester intermediate. The Proton acceptor role is filled by Lys97. Residue Ser351 is part of the active site. A substrate-binding site is contributed by Lys461.

Belongs to the peptidase S13 family.

The catalysed reaction is Preferential cleavage: (Ac)2-L-Lys-D-Ala-|-D-Ala. Also transpeptidation of peptidyl-alanyl moieties that are N-acyl substituents of D-alanine.. Inhibited by penicillin G. In terms of biological role, carboxypeptidase. The chain is Penicillin-sensitive carboxypeptidase A (pscA) from Dictyostelium discoideum (Social amoeba).